The primary structure comprises 505 residues: AMP phosphorylase (505 aa).

Residues Gly-170, 196 to 201 (SRAITS), and Thr-205 contribute to the AMP site. Asp-258 functions as the Proton donor in the catalytic mechanism. Residues Ser-266 and Lys-290 each coordinate AMP.

This sequence belongs to the thymidine/pyrimidine-nucleoside phosphorylase family. Type 2 subfamily.

The enzyme catalyses AMP + phosphate = alpha-D-ribose 1,5-bisphosphate + adenine. The catalysed reaction is CMP + phosphate = cytosine + alpha-D-ribose 1,5-bisphosphate. It carries out the reaction UMP + phosphate = alpha-D-ribose 1,5-bisphosphate + uracil. Catalyzes the conversion of AMP and phosphate to adenine and ribose 1,5-bisphosphate (R15P). Exhibits phosphorylase activity toward CMP and UMP in addition to AMP. Functions in an archaeal AMP degradation pathway, together with R15P isomerase and RubisCO. The sequence is that of AMP phosphorylase from Methanococcus maripaludis (strain C6 / ATCC BAA-1332).